A 100-amino-acid chain; its full sequence is Urease subunit gamma (100 aa).

The protein belongs to the urease gamma subunit family. Heterotrimer of UreA (gamma), UreB (beta) and UreC (alpha) subunits. Three heterotrimers associate to form the active enzyme.

The protein localises to the cytoplasm. The catalysed reaction is urea + 2 H2O + H(+) = hydrogencarbonate + 2 NH4(+). The protein operates within nitrogen metabolism; urea degradation; CO(2) and NH(3) from urea (urease route): step 1/1. In Rhodopseudomonas palustris (strain BisB5), this protein is Urease subunit gamma.